We begin with the raw amino-acid sequence, 428 residues long: Cell division protein FtsZ (428 aa).

GTP is bound by residues 73–77 (GGGGN), 160–162 (GTG), Glu191, Arg195, and Asp239. The tract at residues 378-428 (NAANARVVSAPPKRTPTQTPLTNSPAPTPEPKEKSGLDIPDFLQRRRPPKN) is disordered. The segment covering 392 to 402 (TPTQTPLTNSP) has biased composition (polar residues).

It belongs to the FtsZ family. In terms of assembly, homodimer. Polymerizes to form a dynamic ring structure in a strictly GTP-dependent manner. Interacts directly with several other division proteins.

Its subcellular location is the cytoplasm. Functionally, essential cell division protein that forms a contractile ring structure (Z ring) at the future cell division site. The regulation of the ring assembly controls the timing and the location of cell division. One of the functions of the FtsZ ring is to recruit other cell division proteins to the septum to produce a new cell wall between the dividing cells. Binds GTP and shows GTPase activity. This chain is Cell division protein FtsZ, found in Nostoc sp. (strain PCC 7120 / SAG 25.82 / UTEX 2576).